The following is a 131-amino-acid chain: Conotoxin Cal8.2 (131 aa).

Residues 1-19 (MKLLLTLLLGSALMCITLA) form the signal peptide. A propeptide spanning residues 20–38 (DECGLGTHRPVKEVIDNVR) is cleaved from the precursor.

In terms of processing, contains 4 disulfide bonds. Expressed by the venom duct.

Its subcellular location is the secreted. In terms of biological role, probable neurotoxin with unknown target. Possibly targets ion channels. The sequence is that of Conotoxin Cal8.2 from Californiconus californicus (California cone).